A 430-amino-acid chain; its full sequence is Histidine--tRNA ligase (430 aa).

This sequence belongs to the class-II aminoacyl-tRNA synthetase family. In terms of assembly, homodimer.

The protein resides in the cytoplasm. The catalysed reaction is tRNA(His) + L-histidine + ATP = L-histidyl-tRNA(His) + AMP + diphosphate + H(+). The polypeptide is Histidine--tRNA ligase (Parasynechococcus marenigrum (strain WH8102)).